The following is a 107-amino-acid chain: Cytochrome c2 (107 aa).

Pyrrolidone carboxylic acid is present on Gln1. Positions 13, 16, 17, and 79 each coordinate heme c.

Belongs to the cytochrome c family. Binds 1 heme c group covalently per subunit.

It localises to the periplasm. Cytochrome c2 is found mainly in purple, non-sulfur, photosynthetic bacteria where it functions as the electron donor to the oxidized bacteriochlorophyll in the photophosphorylation pathway. However, it may also have a role in the respiratory chain and is found in some non-photosynthetic bacteria. This is Cytochrome c2 from Rhodoplanes tepidamans (Rhodoplanes cryptolactis).